The sequence spans 155 residues: Small ribosomal subunit protein uS7c (155 aa).

This sequence belongs to the universal ribosomal protein uS7 family. Part of the 30S ribosomal subunit.

It is found in the plastid. The protein resides in the chloroplast. Functionally, one of the primary rRNA binding proteins, it binds directly to 16S rRNA where it nucleates assembly of the head domain of the 30S subunit. The polypeptide is Small ribosomal subunit protein uS7c (rps7) (Cryptomeria japonica (Japanese cedar)).